We begin with the raw amino-acid sequence, 267 residues long: 4-hydroxy-tetrahydrodipicolinate reductase (267 aa).

NAD(+) contacts are provided by residues 8-13, Glu-34, 98-100, and 122-125; these read GAAGRM, GST, and APNM. The active-site Proton donor/acceptor is the His-155. His-156 provides a ligand contact to (S)-2,3,4,5-tetrahydrodipicolinate. Lys-159 functions as the Proton donor in the catalytic mechanism. (S)-2,3,4,5-tetrahydrodipicolinate is bound at residue 165-166; the sequence is GT.

This sequence belongs to the DapB family.

It is found in the cytoplasm. The enzyme catalyses (S)-2,3,4,5-tetrahydrodipicolinate + NAD(+) + H2O = (2S,4S)-4-hydroxy-2,3,4,5-tetrahydrodipicolinate + NADH + H(+). The catalysed reaction is (S)-2,3,4,5-tetrahydrodipicolinate + NADP(+) + H2O = (2S,4S)-4-hydroxy-2,3,4,5-tetrahydrodipicolinate + NADPH + H(+). The protein operates within amino-acid biosynthesis; L-lysine biosynthesis via DAP pathway; (S)-tetrahydrodipicolinate from L-aspartate: step 4/4. Catalyzes the conversion of 4-hydroxy-tetrahydrodipicolinate (HTPA) to tetrahydrodipicolinate. The polypeptide is 4-hydroxy-tetrahydrodipicolinate reductase (Syntrophotalea carbinolica (strain DSM 2380 / NBRC 103641 / GraBd1) (Pelobacter carbinolicus)).